A 141-amino-acid chain; its full sequence is Acetyltransferase YpeA (141 aa).

Positions 1–141 constitute an N-acetyltransferase domain; that stretch reads MEIRVFRQED…GKRLIEDEEY (141 aa).

This sequence belongs to the acetyltransferase family. YpeA subfamily.

The sequence is that of Acetyltransferase YpeA from Salmonella choleraesuis (strain SC-B67).